We begin with the raw amino-acid sequence, 106 residues long: Biogenesis of lysosome-related organelles complex 1 subunit BLS1 (106 aa).

Belongs to the BLOC1S1 family. As to quaternary structure, component of the biogenesis of lysosome-related organelles complex-1 (BLOC-1).

The protein localises to the endosome. Functionally, component of the biogenesis of lysosome-related organelles complex-1 (BLOC-1), a complex involved in endosomal cargo sorting. This is Biogenesis of lysosome-related organelles complex 1 subunit BLS1 (BLS1) from Candida glabrata (strain ATCC 2001 / BCRC 20586 / JCM 3761 / NBRC 0622 / NRRL Y-65 / CBS 138) (Yeast).